Here is a 501-residue protein sequence, read N- to C-terminus: G protein-activated inward rectifier potassium channel 1 (501 aa).

A disordered region spans residues 1–40; the sequence is MSALRRKFGDDYQVVTTSSSGSGLQPQGPGQGPQQQLVPK. Residues 1–80 lie on the Cytoplasmic side of the membrane; it reads MSALRRKFGD…LFTTLVDLKW (80 aa). Positions 18-37 are enriched in low complexity; it reads SSSGSGLQPQGPGQGPQQQL. The chain crosses the membrane as a helical span at residues 81-105; it reads RWNLFIFILTYTVAWLFMASMWWVI. Topologically, residues 106–129 are extracellular; that stretch reads AYTRGDLNKAHVGNYTPCVANVYN. The N-linked (GlcNAc...) asparagine glycan is linked to N119. The helical; Pore-forming intramembrane region spans 130–141; sequence FPSAFLFFIETE. The segment at residues 142-148 is an intramembrane region (pore-forming); the sequence is ATIGYGY. The Selectivity filter signature appears at 143 to 148; the sequence is TIGYGY. The Extracellular portion of the chain corresponds to 149–157; sequence RYITDKCPE. The helical transmembrane segment at 158-179 threads the bilayer; sequence GIILFLFQSILGSIVDAFLIGC. Residues 180 to 501 lie on the Cytoplasmic side of the membrane; the sequence is MFIKMSQPKK…LRKMNSDRFT (322 aa). The tract at residues 182 to 209 is polyphosphoinositide (PIP2)-binding; the sequence is IKMSQPKKRAETLMFSEHAVISMRDGKL. S385 and S424 each carry phosphoserine.

The protein belongs to the inward rectifier-type potassium channel (TC 1.A.2.1) family. KCNJ3 subfamily. Associates with KCNJ5/GIRK4 or KCNJ6/GIRK2 or KCNJ9/GIRK3 to form a G-protein activated heteromultimer pore-forming unit. The resulting inward current is much larger.

It is found in the membrane. It carries out the reaction K(+)(in) = K(+)(out). Heteromultimer composed of KCNJ3/GIRK1 and KCNJ5/GIRK4 is activated by phosphatidylinositol 4,5 biphosphate (PtdIns(4,5)P2). Functionally, inward rectifier potassium channels are characterized by a greater tendency to allow potassium to flow into the cell rather than out of it. Their voltage dependence is regulated by the concentration of extracellular potassium; as external potassium is raised, the voltage range of the channel opening shifts to more positive voltages. The inward rectification is mainly due to the blockage of outward current by internal magnesium. This potassium channel is controlled by G proteins. This receptor plays a crucial role in regulating the heartbeat. This is G protein-activated inward rectifier potassium channel 1 (KCNJ3) from Bos taurus (Bovine).